Consider the following 1342-residue polypeptide: Restriction of telomere capping protein 1 (1342 aa).

The interval 1 to 39 (MSLSPHVENASIPKGSTPIPKNRNVSSIGKGEFLGSSSS) is disordered. WD repeat units follow at residues 207–248 (NKFS…SIDN), 256–296 (EHTR…SKSS), 305–342 (TASDSIRDVKWMPGYNFASKNDQGSSTYGNLKSGYKFA), 367–406 (AHTGPGLCLNWHPNQEYIATGGRDGKCCLWFVGDNANAAE), 439–486 (NTDY…IPKH), and 489–527 (LSETPSLGLVWWDENLIFNIDKGTRINGWDINKEPTVLE). Disordered stretches follow at residues 559 to 593 (PELQPTSSTTCKKHPGTIKNPKNGNPENQGIIGGI), 600 to 619 (TGLTSFTPERPPTLKAGPTF), 630 to 651 (ASSFNSSSASLTSLTPQTENRE), 736 to 766 (KNATETHGDNTTTTNNNDDGDDDDDDDDDDD), and 788 to 831 (LMNE…DRSR). The span at 630–644 (ASSFNSSSASLTSLT) shows a compositional bias: low complexity. Positions 753–766 (DDGDDDDDDDDDDD) are enriched in acidic residues. The span at 815–824 (SSISSISASR) shows a compositional bias: low complexity. A WD 7 repeat occupies 844-884 (KIQTLVDLISIATHNASVYLSIDDLTNFKIWILIRDSLLWD). Disordered regions lie at residues 942 to 963 (AFRANSDEPSDAEKKPVSKLKE) and 1014 to 1047 (DEHEHQEEEQPHDSPTKSAQFHASPIAKSIPILQ). Composition is skewed to basic and acidic residues over residues 952–963 (DAEKKPVSKLKE) and 1016–1028 (HEHQEEEQPHDSP). Residues Ser-1037, Ser-1081, Ser-1088, Ser-1090, Ser-1124, and Ser-1134 each carry the phosphoserine modification. 2 WD repeats span residues 1130 to 1170 (SRPD…KQLY) and 1217 to 1256 (LFGIAADVLKYCPFEDIMGSEGDQSSIRLFCERCGELITN). The segment at 1294–1336 (CVLCERPLKKLTMVILPCGHEGHFQCIQEWFLDENEQECPGGC) adopts an RING-type; degenerate zinc-finger fold.

It belongs to the WD repeat RTC1 family.

The protein resides in the vacuole. May be involved in a process influencing telomere capping. The protein is Restriction of telomere capping protein 1 (RTC1) of Saccharomyces cerevisiae (strain RM11-1a) (Baker's yeast).